The chain runs to 427 residues: Isoprenylcysteine alpha-carbonyl methylesterase ICME (427 aa).

Positions glutamate 26–arginine 59 are disordered. A run of 2 helical transmembrane segments spans residues leucine 102–serine 122 and valine 157–leucine 177. Residues glycine 163–alanine 165 and glutamine 234–alanine 236 each bind substrate. Residues serine 235, aspartate 336, and histidine 368 contribute to the active site.

The protein belongs to the AB hydrolase superfamily. Isoprenylcysteine methylesterase family. In terms of tissue distribution, expressed in roots, rosette and cauline leaves, stems, flowers and siliques.

The protein localises to the endoplasmic reticulum membrane. It is found in the golgi apparatus membrane. It carries out the reaction [protein]-C-terminal S-[(2E,6E)-farnesyl]-L-cysteine methyl ester + H2O = [protein]-C-terminal S-[(2E,6E)-farnesyl]-L-cysteine + methanol + H(+). Its function is as follows. Catalyzes the demethylation of isoprenylcysteine methylesters. In vitro, is specific for N-acetyl-S-farnesyl-L-cysteine methyl ester (AFCme) and has low activity toward N-acetyl-S-geranyl-L-cysteine methyl ester (AGCme). Acts as a positive regulator of ABA signaling. May be involved in the demethylation and inactivation of isoprenylated negative regulators of abscisic acid (ABA) signaling. Carboxyl methylation is a reversible and potentially regulated step in the post-translational modification of prenylated proteins. In Arabidopsis thaliana (Mouse-ear cress), this protein is Isoprenylcysteine alpha-carbonyl methylesterase ICME.